Consider the following 926-residue polypeptide: Alpha-aminoadipic semialdehyde synthase, mitochondrial (926 aa).

Residues 1 to 27 constitute a mitochondrion transit peptide; it reads MLRAQRLRLARLRACVSRGLHHKPVMA. The interval 28-455 is lysine-ketoglutarate reductase; that stretch reads LRREDVNAWE…DAVITSNGLL (428 aa). N6-acetyllysine is present on residues lysine 48, lysine 52, and lysine 56. The residue at position 93 (lysine 93) is an N6-acetyllysine; alternate. Residue lysine 93 is modified to N6-succinyllysine; alternate. Lysine 128 bears the N6-acetyllysine mark. At lysine 138 the chain carries N6-acetyllysine; alternate. Lysine 138 is subject to N6-succinyllysine; alternate. Position 274 is an N6-succinyllysine (lysine 274). Lysine 286 is subject to N6-acetyllysine; alternate. Lysine 286 carries the N6-succinyllysine; alternate modification. An N6-succinyllysine modification is found at lysine 333. The residue at position 458 (lysine 458) is an N6-acetyllysine; alternate. Position 458 is an N6-succinyllysine; alternate (lysine 458). The interval 477 to 926 is saccharopine dehydrogenase; it reads MSTKKKVLVL…VFNTQSTIKL (450 aa). Residues serine 488, aspartate 512, and glutamine 516 each contribute to the NAD(+) site. An N6-acetyllysine; alternate mark is found at lysine 523 and lysine 535. Residues lysine 523 and lysine 535 each carry the N6-succinyllysine; alternate modification. NAD(+) contacts are provided by leucine 554, alanine 576, and serine 577. An L-saccharopine-binding site is contributed by 577–578; the sequence is SY. An N6-acetyllysine; alternate modification is found at lysine 584. Residue lysine 584 is modified to N6-succinyllysine; alternate. Positions 603, 604, and 605 each coordinate NAD(+). Aspartate 604 contacts L-saccharopine. An L-saccharopine-binding site is contributed by arginine 703. An N6-acetyllysine modification is found at lysine 707. 724 to 726 contacts L-saccharopine; it reads TLR. Lysine 732 bears the N6-succinyllysine mark. Lysine 739 carries the post-translational modification N6-acetyllysine. Lysine 761 is subject to N6-acetyllysine; alternate. Lysine 761 carries the post-translational modification N6-succinyllysine; alternate. Lysine 778 and lysine 780 each carry N6-acetyllysine.

This sequence in the N-terminal section; belongs to the AlaDH/PNT family. It in the C-terminal section; belongs to the saccharopine dehydrogenase family. As to quaternary structure, homotetramer.

It localises to the mitochondrion. The enzyme catalyses L-saccharopine + NADP(+) + H2O = L-lysine + 2-oxoglutarate + NADPH + H(+). The catalysed reaction is L-saccharopine + NAD(+) + H2O = (S)-2-amino-6-oxohexanoate + L-glutamate + NADH + H(+). It functions in the pathway amino-acid degradation; L-lysine degradation via saccharopine pathway; glutaryl-CoA from L-lysine: step 1/6. The protein operates within amino-acid degradation; L-lysine degradation via saccharopine pathway; glutaryl-CoA from L-lysine: step 2/6. Functionally, bifunctional enzyme that catalyzes the first two steps in lysine degradation. This is Alpha-aminoadipic semialdehyde synthase, mitochondrial from Rattus norvegicus (Rat).